The primary structure comprises 412 residues: Proline-rich protein 30 (412 aa).

Over residues histidine 33–arginine 45 the composition is skewed to polar residues. Disordered stretches follow at residues histidine 33–serine 75, proline 123–glutamine 174, and proline 318–valine 412. 2 stretches are compositionally biased toward low complexity: residues proline 126–proline 142 and proline 334–alanine 350. Residues threonine 353 to arginine 372 are compositionally biased toward polar residues.

This chain is Proline-rich protein 30 (PRR30), found in Macaca fascicularis (Crab-eating macaque).